Here is a 299-residue protein sequence, read N- to C-terminus: Non-structural protein V (299 aa).

Positions 41–99 are disordered; the sequence is DNPGQERATCREEKAGSSGLSKPCLSAIGSTEGGAPRIRGQGPGESDDDAETLGIPPRN. The segment at 110–120 is interaction with host STAT1; sequence YYVYDHSGEAV. The segment covering 134 to 145 has biased composition (low complexity); that stretch reads GLDGDSTLSGGD. The disordered stretch occupies residues 134 to 168; sequence GLDGDSTLSGGDNESENSDVDIGEPDTEGYAITDR. The segment covering 146-160 has biased composition (acidic residues); sequence NESENSDVDIGEPDT. Residues H232, C251, C255, C267, C269, C272, C276, and C279 each contribute to the Zn(2+) site.

The protein belongs to the paramyxoviruses V protein family. As to quaternary structure, interacts with host IFIH1/MDA5 and DHX58/LGP2; these interactions are involved in the inhibition of the host type I interferon signaling pathway. Interacts with host TYK2; this interaction inhibits the type I interferon signaling pathway without affecting the type II pathway. Interacts with host IRF7; this interaction inhibits IRF7 translocation to the nucleus. Interacts with host CHUK. Interacts with host RELA/p65; this interaction inhibits the nuclear translocation of NF-KappaB. Interacts (via N-terminus) with host STAT1 and JAK1; these interactions inhibit STAT1 phosphorylation by Jak1 and thereby the type I interferon signaling pathway. Interacts (via C-terminus) with host STAT2; this interaction is involved in the inhibition of the host type I interferon signaling pathway. Forms a complex with host PPP1CA and PPP1CC; this interaction prevents dephosphorylation of host IFIH1/MDA5 and leads to the inhibition of the host type I interferon signaling pathway. Interacts with host IRF9; this interaction prevents the binding of IRF9 to STAT2 and thereby the type I interferon signaling pathway. Interacts with host RIGI regulatory protein (via CARDs domain) and host TRIM25 (via SPRY domain); these interactions prevent TRIM25-mediated ubiquitination of RIG-I and disrupts downstream RIG-I signaling.

It localises to the host cytoplasm. Plays an essential role in the inhibition of host immune response. Prevents the establishment of cellular antiviral state by blocking interferon-alpha/beta (IFN-alpha/beta) production and signaling pathway. Interacts with host IFIH1/MDA5 and DHX58/LGP2 to inhibit the transduction pathway involved in the activation of IFN-beta promoter, thus protecting the virus against cell antiviral state. Blocks the type I interferon signaling pathway by interacting with host TYK2 and thereby inhibiting downstream STAT1 and STAT2 phosphorylation. Blocks the type I interferon signaling pathway by disrupting the RIG-I signaling pathway. Moderately affects the type II interferon signaling. Prevents PP1alpha/gamma-mediated dephosphorylation of host IFIH1/MDA5 and thus blocks its activation. This Measles virus (strain Edmonston) (MeV) protein is Non-structural protein V (P/V).